We begin with the raw amino-acid sequence, 444 residues long: Glucoside xylosyltransferase 2 (444 aa).

Residues 1 to 4 are Cytoplasmic-facing; it reads MKLR. The chain crosses the membrane as a helical; Signal-anchor for type II membrane protein span at residues 5-25; it reads SKAAALLLLALAVLLLALLSL. The Lumenal segment spans residues 26–444; it reads RARRDPEPPG…IIHMGPNPMS (419 aa). Residues 31–101 form a disordered region; sequence PEPPGFPARP…LARRPGETRS (71 aa). The span at 68-83 shows a compositional bias: basic residues; the sequence is RSPRRQPPRLRPRAGR. Over residues 87-101 the composition is skewed to basic and acidic residues; the sequence is ASREKLARRPGETRS. N-linked (GlcNAc...) asparagine glycosylation occurs at N275.

The protein belongs to the glycosyltransferase 8 family.

It localises to the membrane. It carries out the reaction 3-O-(beta-D-glucosyl)-L-seryl-[EGF-like domain protein] + UDP-alpha-D-xylose = 3-O-[alpha-D-xylosyl-(1-&gt;3)-beta-D-glucosyl]-L-seryl-[EGF-like domain protein] + UDP + H(+). Functionally, glycosyltransferase which elongates the O-linked glucose attached to EGF-like repeats in the extracellular domain of Notch proteins by catalyzing the addition of xylose. The protein is Glucoside xylosyltransferase 2 (Gxylt2) of Mus musculus (Mouse).